Reading from the N-terminus, the 365-residue chain is Adenosine deaminase (365 aa).

Residues histidine 19 and histidine 21 each coordinate Zn(2+). Substrate is bound by residues histidine 21, aspartate 23, and glycine 181. Residue histidine 208 participates in Zn(2+) binding. Catalysis depends on glutamate 211, which acts as the Proton donor. Aspartate 300 serves as a coordination point for Zn(2+).

This sequence belongs to the metallo-dependent hydrolases superfamily. Adenosine and AMP deaminases family. Adenosine deaminase subfamily. Zn(2+) is required as a cofactor.

The enzyme catalyses adenosine + H2O + H(+) = inosine + NH4(+). It carries out the reaction 2'-deoxyadenosine + H2O + H(+) = 2'-deoxyinosine + NH4(+). Its function is as follows. Catalyzes the hydrolytic deamination of adenosine and 2-deoxyadenosine. The polypeptide is Adenosine deaminase (Mycobacterium tuberculosis (strain ATCC 25177 / H37Ra)).